A 995-amino-acid polypeptide reads, in one-letter code: KN motif and ankyrin repeat domain-containing protein 4 (995 aa).

Disordered stretches follow at residues 1–29 (MEKT…SVET) and 68–127 (TLPR…EVSY). Residues 101–124 (LGTQEQNQSPPLGNAPQASTSRSE) show a composition bias toward polar residues. A coiled-coil region spans residues 343–404 (SSLKQQVSAL…EGQFHQENAK (62 aa)). Disordered regions lie at residues 443–467 (ESWG…GNQS), 503–558 (EAGT…PTDA), 617–642 (QAHP…TSLK), 663–705 (LQFV…PDHK), and 721–740 (PEGT…VPHS). Gly residues predominate over residues 511–523 (GPQGGTRGAGGFL). A compositionally biased stretch (basic and acidic residues) spans 526 to 549 (SDRKTPPAGREETSSNLPGKEHPG). Over residues 625 to 640 (PASSSSPPVEISPSTS) the composition is skewed to low complexity. A compositionally biased stretch (acidic residues) spans 680–693 (TSGEDSTPEDLSDS). Basic and acidic residues predominate over residues 694–705 (EAEKKCDGPDHK). 5 ANK repeats span residues 823-853 (NGNT…NVDH), 862-890 (VMIT…NVNI), 895-924 (GGQT…DVNL), 928-958 (DGSS…DSSL), and 962-992 (AGRT…QGRS).

Strongly expressed in colon, liver, lung, skeletal muscle and kidney.

The protein resides in the cytoplasm. Its function is as follows. May be involved in the control of cytoskeleton formation by regulating actin polymerization. In Homo sapiens (Human), this protein is KN motif and ankyrin repeat domain-containing protein 4 (KANK4).